The following is a 93-amino-acid chain: Small ribosomal subunit protein bS18 (93 aa).

Belongs to the bacterial ribosomal protein bS18 family. As to quaternary structure, part of the 30S ribosomal subunit. Forms a tight heterodimer with protein bS6.

Its function is as follows. Binds as a heterodimer with protein bS6 to the central domain of the 16S rRNA, where it helps stabilize the platform of the 30S subunit. In Acidovorax ebreus (strain TPSY) (Diaphorobacter sp. (strain TPSY)), this protein is Small ribosomal subunit protein bS18.